Consider the following 655-residue polypeptide: Putative esterase (655 aa).

A helical membrane pass occupies residues 9 to 29; the sequence is VLSLTLIYISISIGFSVYFYV. Residues asparagine 71, asparagine 89, asparagine 101, asparagine 185, asparagine 386, asparagine 449, and asparagine 512 are each glycosylated (N-linked (GlcNAc...) asparagine; by host). The active-site Charge relay system is the histidine 515. N-linked (GlcNAc...) asparagine; by host glycosylation is found at asparagine 527 and asparagine 597.

It belongs to the type-B carboxylesterase/lipase family.

The protein resides in the membrane. It catalyses the reaction a carboxylic ester + H2O = an alcohol + a carboxylate + H(+). This Noctuidae (owlet moths) protein is Putative esterase.